The primary structure comprises 416 residues: Chromate transport protein (416 aa).

The disordered stretch occupies residues 1–21 (MSVANEESYRPSKATDATTEA). Transmembrane regions (helical) follow at residues 99 to 119 (LGGV…MFAL), 128 to 148 (FVGT…IALI), 160 to 177 (LLDR…LAAI), 181 to 198 (DFWI…LLVL), 204 to 224 (ALLV…WAAP), 237 to 257 (ASVL…FGGA), 283 to 303 (LALS…VGYV), 308 to 328 (IGAV…SLIF), 341 to 361 (LHAF…ATTI), 371 to 391 (VPSL…LYAW), and 395 to 415 (LNVV…FPNQ).

This sequence belongs to the chromate ion transporter (CHR) (TC 2.A.51) family.

It is found in the cell inner membrane. In terms of biological role, this protein reduces chromate accumulation and is essential for chromate resistance. The protein is Chromate transport protein of Pseudomonas aeruginosa.